The primary structure comprises 242 residues: MEADALSPVGLGLLLLPFLVTLLAALCVRCRELPVSYDSTSTESLYPRSILIKPPQITVPRTPAVSYPLVTSFPPLRQPDLLPIPRSPQPLGGSHRMPSSQQNSDDANSVASYENQEPACKNVDADEDEDDYPNGYLVVLPDSSPAAVPVVSSAPVPSNPDLGDSAFSVESCEDYVNVPESEESAEASLDGSREYVNVSPEQQPVTRAELASVNSQEVEDEGEEEGVDGEEAPDYENLQELN.

Topologically, residues 1–4 are extracellular; sequence MEAD. The chain crosses the membrane as a helical; Signal-anchor for type III membrane protein span at residues 5–28; the sequence is ALSPVGLGLLLLPFLVTLLAALCV. Residues C27 and C30 are each lipidated (S-palmitoyl cysteine). Residues 29–242 are Cytoplasmic-facing; that stretch reads RCRELPVSYD…PDYENLQELN (214 aa). T40 carries the phosphothreonine modification. Residues S41, S44, S87, S104, S109, and S112 each carry the phosphoserine modification. A disordered region spans residues 78-118; that stretch reads QPDLLPIPRSPQPLGGSHRMPSSQQNSDDANSVASYENQEP. Residues 97–115 are compositionally biased toward polar residues; sequence MPSSQQNSDDANSVASYEN. The interval 136–139 is interaction with PLCG1; sequence YLVV. Y175 bears the Phosphotyrosine mark. Interaction with GRB2, GRAP2 and PIK3R1 stretches follow at residues 175 to 178 and 195 to 198; these read YVNV. The interval 176-242 is disordered; that stretch reads VNVPESEESA…PDYENLQELN (67 aa). S199, S212, and S215 each carry phosphoserine. The segment covering 217–234 has biased composition (acidic residues); sequence EVEDEGEEEGVDGEEAPD. Phosphotyrosine is present on Y235.

In terms of assembly, when phosphorylated, interacts directly with the PIK3R1 subunit of phosphoinositide 3-kinase and the SH2 domains of GRB2, GRAP, GRAP2, PLCG1 and PLCG2. Interacts indirectly with CBL, SOS, VAV, and LCP2. Interacts with SHB and SKAP2. Interacts with FCGR1A. Interacts with CLNK. Interacts with GRB2, PLCG1 and THEMIS upon TCR activation in thymocytes. Interacts with THEMIS2. Post-translationally, phosphorylated on tyrosines by ZAP70 upon TCR activation, or by SYK upon other immunoreceptor activation; which leads to the recruitment of multiple signaling molecules. Is one of the most prominently tyrosine-phosphorylated proteins detected following TCR engagement. May be dephosphorylated by PTPRJ. Phosphorylated by ITK leading to the recruitment of VAV1 to LAT-containing complexes. In terms of processing, palmitoylation of Cys-27 and Cys-30 is required for raft targeting and efficient phosphorylation. Phosphorylated on tyrosines by ZAP70 upon TCR activation, or by SYK upon other immunoreceptor activation; which leads to the recruitment of multiple signaling molecules. Is one of the most prominently tyrosine-phosphorylated proteins detected following TCR engagement. May be dephosphorylated by PTPRJ. Phosphorylated by ITK leading to the recruitment of VAV1 to LAT-containing complexes. Post-translationally, 'Lys-63'-linked ubiquitinated by TRAF6. Expressed in T-cells and mast cells.

The protein resides in the cell membrane. Functionally, required for TCR (T-cell antigen receptor)- and pre-TCR-mediated signaling, both in mature T-cells and during their development. Involved in FCGR3 (low affinity immunoglobulin gamma Fc region receptor III)-mediated signaling in natural killer cells and FCER1 (high affinity immunoglobulin epsilon receptor)-mediated signaling in mast cells. Couples activation of these receptors and their associated kinases with distal intracellular events such as mobilization of intracellular calcium stores, PKC activation, MAPK activation or cytoskeletal reorganization through the recruitment of PLCG1, GRB2, GRAP2, and other signaling molecules. This Mus musculus (Mouse) protein is Linker for activation of T-cells family member 1 (Lat).